The primary structure comprises 538 residues: Potassium channel subfamily K member 10 (538 aa).

Residues methionine 1–threonine 71 lie on the Cytoplasmic side of the membrane. The helical transmembrane segment at valine 72–alanine 92 threads the bilayer. N-linked (GlcNAc...) asparagine glycosylation is found at asparagine 144, asparagine 147, and asparagine 148. The segment at residues leucine 154–glycine 180 is an intramembrane region (pore-forming). Threonine 167, isoleucine 168, glycine 169, and tyrosine 170 together coordinate K(+). Positions threonine 167–asparagine 172 are selectivity filter 1. The chain crosses the membrane as a helical span at residues isoleucine 182–isoleucine 202. The Cytoplasmic portion of the chain corresponds to glycine 203 to valine 233. A helical transmembrane segment spans residues isoleucine 234 to isoleucine 254. The pore-forming intramembrane region spans alanine 263–glutamate 294. 4 residues coordinate K(+): threonine 276, valine 277, glycine 278, and phenylalanine 279. Positions threonine 276 to aspartate 281 are selectivity filter 2. The chain crosses the membrane as a helical span at residues leucine 299–glycine 319. The Cytoplasmic segment spans residues aspartate 320–asparagine 538. Residues serine 412 to asparagine 421 are compositionally biased toward polar residues. Disordered stretches follow at residues serine 412 to isoleucine 443 and glutamine 510 to asparagine 538. The segment covering aspartate 522–asparagine 538 has biased composition (basic and acidic residues).

Belongs to the two pore domain potassium channel (TC 1.A.1.8) family. As to quaternary structure, homodimer; disulfide-linked. Forms heterodimers with other 2-pore domain K(+) channel subunits, such as KCNK2, KCNK4 and KCNK18. Abundantly expressed in pancreas and kidney and to a lower level in brain, testis, colon, and small intestine. In brain, mainly expressed in cerebellum, occipital lobe, putamen, and thalamus. No expression is detected in amygdala and spinal cord. In terms of tissue distribution, strongly expressed in kidney (primarily in the proximal tubule) and pancreas. As to expression, abundantly expressed in brain.

The protein localises to the cell membrane. The enzyme catalyses K(+)(in) = K(+)(out). It catalyses the reaction Rb(+)(in) = Rb(+)(out). It carries out the reaction Cs(+)(in) = Cs(+)(out). Its activity is regulated as follows. Activated by various stimuli including acidic pH, anesthetics chloroform, halothane and isoflurane, mechanical stretch, lipids such as arachidonic, docosahexaenoic and linoleic polyunsaturated fatty acids and lysophosphatidylcholine and lysophosphatidylinositol lysophospholipids. Inhibited by norfluoxetine, the active metabolite of antidepressant fluoxetine (Prozac). Its function is as follows. K(+) channel that conducts voltage-dependent outward rectifying currents upon membrane depolarization. Voltage sensing is coupled to K(+) electrochemical gradient in an 'ion flux gating' mode where outward but not inward ion flow opens the gate. Converts to voltage-independent 'leak' conductance mode upon stimulation by various stimuli including mechanical membrane stretch, acidic pH, heat and lipids. Homo- and heterodimerizes to form functional channels with distinct regulatory and gating properties. In trigeminal ganglia sensory neurons, the heterodimer of KCNK10/TREK-2 and KCNK18/TRESK inhibits neuronal firing and neurogenic inflammation by stabilizing the resting membrane potential at K(+) equilibrium potential as well as by regulating the threshold of action potentials and the spike frequency. Permeable to other monovalent ions such as Rb(+) and Cs(+). This chain is Potassium channel subfamily K member 10, found in Homo sapiens (Human).